The following is a 120-amino-acid chain: Prefoldin subunit beta (120 aa).

This sequence belongs to the prefoldin subunit beta family. Heterohexamer of two alpha and four beta subunits.

The protein resides in the cytoplasm. Molecular chaperone capable of stabilizing a range of proteins. Seems to fulfill an ATP-independent, HSP70-like function in archaeal de novo protein folding. The protein is Prefoldin subunit beta (pfdB) of Methanopyrus kandleri (strain AV19 / DSM 6324 / JCM 9639 / NBRC 100938).